The following is a 375-amino-acid chain: Succinyl-diaminopimelate desuccinylase (375 aa).

Residue histidine 66 participates in Zn(2+) binding. The active site involves aspartate 68. Aspartate 99 lines the Zn(2+) pocket. Glutamate 133 functions as the Proton acceptor in the catalytic mechanism. The Zn(2+) site is built by glutamate 134, glutamate 162, and histidine 348.

The protein belongs to the peptidase M20A family. DapE subfamily. In terms of assembly, homodimer. Zn(2+) serves as cofactor. Requires Co(2+) as cofactor.

The catalysed reaction is N-succinyl-(2S,6S)-2,6-diaminopimelate + H2O = (2S,6S)-2,6-diaminopimelate + succinate. Its pathway is amino-acid biosynthesis; L-lysine biosynthesis via DAP pathway; LL-2,6-diaminopimelate from (S)-tetrahydrodipicolinate (succinylase route): step 3/3. In terms of biological role, catalyzes the hydrolysis of N-succinyl-L,L-diaminopimelic acid (SDAP), forming succinate and LL-2,6-diaminopimelate (DAP), an intermediate involved in the bacterial biosynthesis of lysine and meso-diaminopimelic acid, an essential component of bacterial cell walls. The sequence is that of Succinyl-diaminopimelate desuccinylase from Salmonella typhi.